Reading from the N-terminus, the 127-residue chain is Small ribosomal subunit protein eS8 (127 aa).

The protein belongs to the eukaryotic ribosomal protein eS8 family. Part of the 30S ribosomal subunit.

The sequence is that of Small ribosomal subunit protein eS8 (rps8e) from Pyrococcus horikoshii (strain ATCC 700860 / DSM 12428 / JCM 9974 / NBRC 100139 / OT-3).